Here is a 1105-residue protein sequence, read N- to C-terminus: Tubulin-folding cofactor D (1105 aa).

N-linked (GlcNAc...) asparagine glycosylation is found at Asn-122 and Asn-126. HEAT repeat units follow at residues 308 to 345, 347 to 385, 401 to 446, and 452 to 489; these read IYLE…RLPW, LAEQ…WHGA, SKCL…CYSK, and LQTN…RHAS. Asn-373 is a glycosylation site (N-linked (GlcNAc...) asparagine). 3 N-linked (GlcNAc...) asparagine glycosylation sites follow: Asn-721, Asn-883, and Asn-1083.

In terms of assembly, interacts with alp21.

Its subcellular location is the cytoplasm. It localises to the cytoskeleton. Functionally, has a function in the folding of beta-tubulin. Microtubule-associated protein that is essential to direct polarized cell growth and to position the nucleus and septum to the center of the cell during mitosis. This Schizosaccharomyces pombe (strain 972 / ATCC 24843) (Fission yeast) protein is Tubulin-folding cofactor D (alp1).